A 497-amino-acid polypeptide reads, in one-letter code: MEMILITLCLTTLLALLLKSILKRTATKNFNLPPSPWRLPVIGNLHQLSLHTHRSLRSLSLRYGPLMLLHFGRTPVLIVSSADVAHDVMKTHDLVCANRPKTKVVDKILSGGRDVAFAPYGEYWRQMKSICIQNLLNNKMVRSYEKIREEEIKRMIEKLEKASCSSSPSPVNLSQILMTLTNDIICRVALGRKYSGKKDGIDVENIVRTFAALLGEFPVGEYIPSLSWIDRIRGLDHKMEVVDKRFDEFLERVVKEHEEADKETRSDLVDKLLTIQSDKTGQFELEKSALKLIIWDMFLAGTATTLSFLEWAMTELMRNPKVMKKLQEEIRSSSPQDLFVTEKEAEKMNYLQAVIKEALRLRPPAPLLVPRVLSEDVKLKGYNIPAGTQVIVNAWAIQRDTTTWGTDAEEFKPERHLDTNLDFQGQDFKFIPFGSGKRICPGIGFTSALIGVTLANIVKRFNWRMDVEPQRVQHDLTEATGLVVFRKFPLIAIPSSA.

Residues 3–23 traverse the membrane as a helical segment; it reads MILITLCLTTLLALLLKSILK. C440 contributes to the heme binding site.

It belongs to the cytochrome P450 family. It depends on heme as a cofactor.

Its subcellular location is the membrane. This is Cytochrome P450 71A20 (CYP71A20) from Arabidopsis thaliana (Mouse-ear cress).